Consider the following 250-residue polypeptide: DNA repair protein RecO (250 aa).

Belongs to the RecO family.

Its function is as follows. Involved in DNA repair and RecF pathway recombination. This is DNA repair protein RecO from Lactobacillus acidophilus (strain ATCC 700396 / NCK56 / N2 / NCFM).